The primary structure comprises 548 residues: Phosphoglucomutase (548 aa).

The active-site Phosphoserine intermediate is S135. Residues S135, D288, D290, and D292 each contribute to the Mg(2+) site.

It belongs to the phosphohexose mutase family. The cofactor is Mg(2+).

The enzyme catalyses alpha-D-glucose 1-phosphate = alpha-D-glucose 6-phosphate. It participates in glycolipid metabolism; diglucosyl-diacylglycerol biosynthesis. Functionally, catalyzes the interconversion between glucose-6-phosphate and alpha-glucose-1-phosphate. This is the first step in the biosynthesis of diglucosyl-diacylglycerol (Glc2-DAG), i.e. a glycolipid found in the membrane, which is also used as a membrane anchor for lipoteichoic acid (LTA). The chain is Phosphoglucomutase (pgcA) from Staphylococcus haemolyticus (strain JCSC1435).